The primary structure comprises 224 residues: Large ribosomal subunit protein uL4 (224 aa).

The segment at 52–109 (AAARQGTHSTKTRGDVSGGGRKPYRQKGTGRARQGSTRAPQFTGGGVVHGPKPRDYSQ) is disordered.

Belongs to the universal ribosomal protein uL4 family. Part of the 50S ribosomal subunit.

In terms of biological role, one of the primary rRNA binding proteins, this protein initially binds near the 5'-end of the 23S rRNA. It is important during the early stages of 50S assembly. It makes multiple contacts with different domains of the 23S rRNA in the assembled 50S subunit and ribosome. Forms part of the polypeptide exit tunnel. In Mycobacterium marinum (strain ATCC BAA-535 / M), this protein is Large ribosomal subunit protein uL4.